Here is a 614-residue protein sequence, read N- to C-terminus: Nuclear receptor subfamily 1 group D member 1 (614 aa).

The span at 1 to 12 (MTTLDSNNNTGG) shows a compositional bias: polar residues. The tract at residues 1-70 (MTTLDSNNNT…TQDPARSFGS (70 aa)) is required for phosphorylation by CSNK1E and cytoplasmic localization. The disordered stretch occupies residues 1 to 119 (MTTLDSNNNT…SSRVSPSKST (119 aa)). Residues 1-128 (MTTLDSNNNT…TSNITKLNGM (128 aa)) are modulating. The span at 14–34 (ITYIGSSGSSPSRTSPESLYS) shows a compositional bias: low complexity. Over residues 35-48 (DNSNGSFQSLTQGC) the composition is skewed to polar residues. Positions 49–284 (PTYFPPSPTG…PPRSPSPEPT (236 aa)) are crucial for activation of GJA1. Ser-55 and Ser-59 each carry phosphoserine; by GSK3-beta. Positions 69-102 (GSIPPSLSDDGSPSSSSSSSSSSSSFYNGSPPGS) are enriched in low complexity. The nuclear receptor DNA-binding region spans 129 to 205 (VLLCKVCGDV…VGMSRDAVRF (77 aa)). 2 NR C4-type zinc fingers span residues 132–152 (CKVC…CEGC) and 169–193 (CLKN…FKKC). Lys-191 and Lys-192 each carry N6-acetyllysine; by KAT5. Over residues 233-243 (SQCPLETSPTQ) the composition is skewed to polar residues. Disordered regions lie at residues 233–285 (SQCP…EPTV) and 311–345 (PGNF…DNNT). Pro residues predominate over residues 244–261 (HPTPGPMGPSPPPAPVPS). A Phosphothreonine; by CDK1 modification is found at Thr-274. In terms of domain architecture, NR LBD spans 284 to 614 (TVEDVISQVA…KLLSFRVDAQ (331 aa)). A compositionally biased stretch (polar residues) spans 311-324 (PGNFNANHASGSPP). Lys-400 carries the N6-acetyllysine modification. Cys-418 contributes to the heme binding site. Lys-591 is subject to N6-acetyllysine. His-602 serves as a coordination point for heme.

It belongs to the nuclear hormone receptor family. NR1 subfamily. As to quaternary structure, binds DNA as a monomer or a homodimer. Interacts with C1D, NR2E3 and SP1. Interacts with OPHN1 (via C-terminus). Interacts with ZNHIT1. Interacts with PER2; the interaction associates PER2 to BMAL1 promoter region. Interacts with CRY1. Interacts with CCAR2. Interacts with SIAH2. Interacts with CDK1. Interacts with FBXW7. Interacts with HUWE1. Interacts with NR0B2. Interacts with NFIL3. Interacts (via domain NR LBD) with HSP90AA1 and HSP90AB1. Post-translationally, ubiquitinated, leading to its proteasomal degradation. Ubiquitinated by SIAH2; leading to its proteasomal degradation. Ubiquitinated by the SCF(FBXW7) complex when phosphorylated by CDK1 leading to its proteasomal degradation. Rapidly ubiquitinated in response to inflammatory triggers and sumoylation is a prerequisite to its ubiquitination. Sumoylated by UBE2I, desumoylated by SENP1, and sumoylation is a prerequisite to its ubiquitination. In terms of processing, phosphorylated by CSNK1E; phosphorylation enhances its cytoplasmic localization. Post-translationally, undergoes lysosome-mediated degradation in a time-dependent manner in the liver. Widely expressed. Expressed at high levels in the liver, adipose tissue, skeletal muscle and brain. Also expressed in endothelial cells (ECs), vascular smooth muscle cells (VSMCs) and macrophages. Expression oscillates diurnally in the suprachiasmatic nucleus (SCN) of the hypothalamus as well as in peripheral tissues. Expression increases during the differentiation of pre-adipocytes into mature adipocytes. Expressed at high levels in some squamous carcinoma cell lines.

The protein resides in the nucleus. Its subcellular location is the cytoplasm. It localises to the cell projection. It is found in the dendrite. The protein localises to the dendritic spine. Functionally, transcriptional repressor which coordinates circadian rhythm and metabolic pathways in a heme-dependent manner. Integral component of the complex transcription machinery that governs circadian rhythmicity and forms a critical negative limb of the circadian clock by directly repressing the expression of core clock components BMAL1, CLOCK and CRY1. Also regulates genes involved in metabolic functions, including lipid and bile acid metabolism, adipogenesis, gluconeogenesis and the macrophage inflammatory response. Acts as a receptor for heme which stimulates its interaction with the NCOR1/HDAC3 corepressor complex, enhancing transcriptional repression. Recognizes two classes of DNA response elements within the promoter of its target genes and can bind to DNA as either monomers or homodimers, depending on the nature of the response element. Binds as a monomer to a response element composed of the consensus half-site motif 5'-[A/G]GGTCA-3' preceded by an A/T-rich 5' sequence (RevRE), or as a homodimer to a direct repeat of the core motif spaced by two nucleotides (RevDR-2). Acts as a potent competitive repressor of ROR alpha (RORA) function and regulates the levels of its ligand heme by repressing the expression of PPARGC1A, a potent inducer of heme synthesis. Regulates lipid metabolism by repressing the expression of APOC3 and by influencing the activity of sterol response element binding proteins (SREBPs); represses INSIG2 which interferes with the proteolytic activation of SREBPs which in turn govern the rhythmic expression of enzymes with key functions in sterol and fatty acid synthesis. Regulates gluconeogenesis via repression of G6PC1 and PEPCK and adipocyte differentiation via repression of PPARG. Regulates glucagon release in pancreatic alpha-cells via the AMPK-NAMPT-SIRT1 pathway and the proliferation, glucose-induced insulin secretion and expression of key lipogenic genes in pancreatic-beta cells. Positively regulates bile acid synthesis by increasing hepatic expression of CYP7A1 via repression of NR0B2 and NFIL3 which are negative regulators of CYP7A1. Modulates skeletal muscle oxidative capacity by regulating mitochondrial biogenesis and autophagy; controls mitochondrial biogenesis and respiration by interfering with the STK11-PRKAA1/2-SIRT1-PPARGC1A signaling pathway. Represses the expression of SERPINE1/PAI1, an important modulator of cardiovascular disease and the expression of inflammatory cytokines and chemokines in macrophages. Represses gene expression at a distance in macrophages by inhibiting the transcription of enhancer-derived RNAs (eRNAs). Plays a role in the circadian regulation of body temperature and negatively regulates thermogenic transcriptional programs in brown adipose tissue (BAT); imposes a circadian oscillation in BAT activity, increasing body temperature when awake and depressing thermogenesis during sleep. In concert with NR2E3, regulates transcriptional networks critical for photoreceptor development and function. In addition to its activity as a repressor, can also act as a transcriptional activator. In the ovarian granulosa cells acts as a transcriptional activator of STAR which plays a role in steroid biosynthesis. In collaboration with SP1, activates GJA1 transcription in a heme-independent manner. Represses the transcription of CYP2B10, CYP4A10 and CYP4A14. Represses the transcription of CES2. Represses and regulates the circadian expression of TSHB in a NCOR1-dependent manner. Negatively regulates the protein stability of NR3C1 and influences the time-dependent subcellular distribution of NR3C1, thereby affecting its transcriptional regulatory activity. Plays a critical role in the circadian control of neutrophilic inflammation in the lung; under resting, non-stress conditions, acts as a rhythmic repressor to limit inflammatory activity whereas in the presence of inflammatory triggers undergoes ubiquitin-mediated degradation thereby relieving inhibition of the inflammatory response. Plays a key role in the circadian regulation of microglial activation and neuroinflammation; suppresses microglial activation through the NF-kappaB pathway in the central nervous system. Plays a role in the regulation of the diurnal rhythms of lipid and protein metabolism in the skeletal muscle via transcriptional repression of genes controlling lipid and amino acid metabolism in the muscle. This chain is Nuclear receptor subfamily 1 group D member 1 (NR1D1), found in Homo sapiens (Human).